The following is a 1370-amino-acid chain: MEVCRLENRPLPHAAVEANLLRQVKESAAEGLFKSFQLLVGKDVRENSVRFEVLLGVYANVIEFVKFLETGLAASCINTEFRDLKRMVDGKIQFKVSVPTIAHSDGRRPNKQRQYIVMKCTSKHHISAEIELAIADLENMHMEPETDLDMLEYIGTVKTVTSALQFGIDALERGLIDTVLSVKLRHAPPLFILQSLSDPTLTERGLKKSIKSDLVSMFKDHLITHSFFINKAEALATPRQYILGMLSSIINSVSKETVFKGTSTYTTSSGEPVAGVIETTDAILNKLLTLLGEYKTEVVGPAAYASYVVRGENLVTAVSYGRAMRSFEQFKNKLVDDPVGQAGSLDKNADSDNEYSSLPQTTIPVSVVKVGSQPVIVESIQKMYNEAQAPFPLNRRMQYTYFFPLGLFIPRPKYTTSTSVKLEDDSCLSSEVWVVNKTNTPLCFNYQNALRTLCHPRVNSPSACLQELQRSNLADNALEAFRDGLRSRPMDNMNLFAHVRRFYLKRTEVVLLPIAQKCNLSTDDLLHPTNHKLLQLELHPLFDFVVERVAAEEAAFRATHRTFSGNIPQPLAPNQFQDSRGKQFEAATSLQHAVDDATLEVIRSTAFDPTYPFICYIVEAMIHGQPEKFTMNIPFISLCINTYWDNSGNLAFINSFFMVKNICTHMGGGLINRDAYALYRKILGEVVAIKHAIVRMCGAEQLGNNELQGYVNGLLDRQLLPPFAYRDTFAQLDNRGARFVIGAKEHDNSQAFVHALPDFENANQVAPAMYHTRNTFNWDTFEYITVSNGNNDADAADLEKIYYYVMLPVCTNGHMCGMGADFENIAIVLGYNIPVFDIPQFNGDDTVLEHLENGPLRDILIASEVNPTADMLRMMIVSYLNCPQMTQVVRVKTRRDHCQNLGPEQGAIIEHTVMVNGFVCFGIPERMKQVAKNMFYPVPFHRFYCDPLVAGSWDNHIQNYVMNNFSQRSLEAFNAPPGIMADYAEWHKAPMAKYITSCKASTASLSAFTVMHNKLSPIAFIVQAKHKIHPGFALTVLRTDEVLAENVMFSARASTSVFVGRPTVSRREVRADAVSFEVNHELATIETGLSYSSVVTPAHVASITTDMGIYCQNLFSIFSNEIYDHADVNNYVARKIGVEDAVNRHNPRALIAGVGQISHPPGLVHGQYATCEVIPTPVTADVAYFQKSNSPRGRASCVVSSDINNQERAEQFLYDHSLPDPAYEYRSTVNPWASQKGSLGDVLYGSRYRQVSSPGIYSPSKPFFNKEEMLKNNRSFYTLVNEYAQRLAGYAATSCTDLQYVVINGTDVFLEQPCLFLQEAFPTLSASHRVLLDEYMSFKNTHAPVHMGHYFIEEVAPVKRVFKIGNKVAS.

Belongs to the herpesviridae major capsid protein family. Homomultimer. Makes the hexons and eleven out of twelve pentons. Interacts with triplex proteins 1/TRX1 and 2/TRX2; adjacent capsomers are linked together in groups of three by triplexes, heterotrimeric complexes composed of one molecule of TRX1 and two molecules of TRX2. Interacts with scaffold protein; this interaction allows efficient MCP transport to the host nucleus. Interacts with capsid vertex component 2/CVC2. Interacts with the small capsomere-interacting protein/SCP.

It is found in the virion. The protein localises to the host nucleus. Self-assembles to form an icosahedral capsid with a T=16 symmetry, about 200 nm in diameter, and consisting of 150 hexons and 12 pentons (total of 162 capsomers). Hexons form the edges and faces of the capsid and are each composed of six MCP molecules. In contrast, one penton is found at each of the 12 vertices. Eleven of the pentons are MCP pentamers, while the last vertex is occupied by the portal complex. The capsid is surrounded by a layer of proteinaceous material designated the tegument which, in turn, is enclosed in an envelope of host cell-derived lipids containing virus-encoded glycoproteins. The sequence is that of Major capsid protein from Connochaetes taurinus (Blue wildebeest).